We begin with the raw amino-acid sequence, 136 residues long: Mediator of RNA polymerase II transcription subunit 22 (136 aa).

Belongs to the Mediator complex subunit 22 family. In terms of assembly, component of the Mediator complex.

The protein resides in the nucleus. Functionally, component of the Mediator complex, a coactivator involved in the regulated transcription of nearly all RNA polymerase II-dependent genes. Mediator functions as a bridge to convey information from gene-specific regulatory proteins to the basal RNA polymerase II transcription machinery. Mediator is recruited to promoters by direct interactions with regulatory proteins and serves as a scaffold for the assembly of a functional preinitiation complex with RNA polymerase II and the general transcription factors. The sequence is that of Mediator of RNA polymerase II transcription subunit 22 (med22) from Schizosaccharomyces pombe (strain 972 / ATCC 24843) (Fission yeast).